We begin with the raw amino-acid sequence, 154 residues long: MNWAKRSAFFLISVACFLADYYSKYWALTELGARKIVVNTYMNFILAFNHGAAFSFLARAGGWQRWLFAGFAGIVALWLIMTLLTKSHHWLMSVSYACILGGAVGNLYDRVVYGYVIDFIQWHYRTFYWPVFNLADVAITLGVILMLIAELHRR.

The next 4 membrane-spanning stretches (helical) occupy residues alanine 8–leucine 28, isoleucine 36–phenylalanine 56, tryptophan 66–lysine 86, and histidine 88–tyrosine 108. Residues aspartate 118 and aspartate 136 contribute to the active site. Residues tryptophan 129–alanine 149 form a helical membrane-spanning segment.

Belongs to the peptidase A8 family.

The protein resides in the cell inner membrane. The catalysed reaction is Release of signal peptides from bacterial membrane prolipoproteins. Hydrolyzes -Xaa-Yaa-Zaa-|-(S,diacylglyceryl)Cys-, in which Xaa is hydrophobic (preferably Leu), and Yaa (Ala or Ser) and Zaa (Gly or Ala) have small, neutral side chains.. The protein operates within protein modification; lipoprotein biosynthesis (signal peptide cleavage). This protein specifically catalyzes the removal of signal peptides from prolipoproteins. The sequence is that of Lipoprotein signal peptidase from Dichelobacter nodosus (strain VCS1703A).